Here is a 345-residue protein sequence, read N- to C-terminus: Ketol-acid reductoisomerase (NADP(+)) (345 aa).

The region spanning 2 to 182 is the KARI N-terminal Rossmann domain; sequence AKVYHDSSAD…GTTRAGVLET (181 aa). NADP(+) is bound by residues 25–28, arginine 48, serine 51, serine 53, and 83–86; these read YGSQ and DTEQ. The active site involves histidine 108. Glycine 134 contributes to the NADP(+) binding site. The KARI C-terminal knotted domain maps to 183 to 328; that stretch reads TFKEETETDL…AQLRDMMTFL (146 aa). Residues aspartate 191, glutamate 195, glutamate 227, and glutamate 231 each coordinate Mg(2+). A substrate-binding site is contributed by serine 252.

It belongs to the ketol-acid reductoisomerase family. Requires Mg(2+) as cofactor.

It catalyses the reaction (2R)-2,3-dihydroxy-3-methylbutanoate + NADP(+) = (2S)-2-acetolactate + NADPH + H(+). It carries out the reaction (2R,3R)-2,3-dihydroxy-3-methylpentanoate + NADP(+) = (S)-2-ethyl-2-hydroxy-3-oxobutanoate + NADPH + H(+). The protein operates within amino-acid biosynthesis; L-isoleucine biosynthesis; L-isoleucine from 2-oxobutanoate: step 2/4. Its pathway is amino-acid biosynthesis; L-valine biosynthesis; L-valine from pyruvate: step 2/4. Its function is as follows. Involved in the biosynthesis of branched-chain amino acids (BCAA). Catalyzes an alkyl-migration followed by a ketol-acid reduction of (S)-2-acetolactate (S2AL) to yield (R)-2,3-dihydroxy-isovalerate. In the isomerase reaction, S2AL is rearranged via a Mg-dependent methyl migration to produce 3-hydroxy-3-methyl-2-ketobutyrate (HMKB). In the reductase reaction, this 2-ketoacid undergoes a metal-dependent reduction by NADPH to yield (R)-2,3-dihydroxy-isovalerate. This is Ketol-acid reductoisomerase (NADP(+)) from Koribacter versatilis (strain Ellin345).